Reading from the N-terminus, the 147-residue chain is Hemoglobin subunit beta-H0 (147 aa).

A Globin domain is found at 3-147; the sequence is HFTAEEKAAI…VATALSHKYH (145 aa). Heme b-binding residues include H64 and H93.

It belongs to the globin family. In terms of assembly, heterotetramer of two alpha chains and two beta chains. Red blood cells.

Functionally, this is a minor early embryonic beta chain. This chain is Hemoglobin subunit beta-H0 (Hbb-bh0), found in Mus musculus (Mouse).